A 175-amino-acid chain; its full sequence is Zinc finger protein ZAT18 (175 aa).

C2H2-type zinc fingers lie at residues 49–71 and 93–115; these read FECKTCNRKFDSFQALGGHRASH and HKCTICDQMFGTGQALGGHMRKH. Residues 71–78 carry the Nuclear localization signal motif; it reads HKKPKLIV. The EAR-like (transcriptional repression) signature appears at 146–152; the sequence is LDLNLTP.

Mostly expressed in stems, siliques and leaves, and, to a lower extent, in cotyledons, hypocotyls and roots.

The protein resides in the nucleus. In terms of biological role, transcription factor involved in stress responses. Positive regulator of the jasmonic acid (JA)- mediated signaling pathway. Triggers the up-regulation of LOX3, VSP2, PAL1 and PAL2 in a JA-dependent manner. Promotes drought and osmotic stress tolerance by preventing reactive oxygen species (ROS) production (e.g. H(2)O(2)). This is Zinc finger protein ZAT18 from Arabidopsis thaliana (Mouse-ear cress).